The sequence spans 485 residues: Pentatricopeptide repeat-containing protein At1g62720 (485 aa).

12 PPR repeats span residues 68–102, 103–137, 138–172, 173–207, 208–242, 243–277, 278–312, 313–347, 348–378, 380–414, 415–449, and 450–484; these read SIVDFSKVLSKIAKSKNYDLVISLFHHMEVCGIGH, DLYSYNIVINCLCRCSRFVIALSVVGKMMKFGYEP, DVVTVSSLINGFCQGNRVFDAIDLVSKMEEMGFRP, DVVIYNTIIDGSCKIGLVNDAVELFDRMERDGVRA, DAVTYNSLVAGLCCSGRWSDAARLMRDMVMRDIVP, NVITFTAVIDVFVKEGKFSEAMKLYEEMTRRCVDP, DVFTYNSLINGLCMHGRVDEAKQMLDLMVTKGCLP, DVVTYNTLINGFCKSKRVDEGTKLFREMAQRGLVG, DTITYNTIIQGYFQAGRPDAAQEIFSRMDSR, NIRTYSILLYGLCMNWRVEKALVLFENMQKSEIEL, DITTYNIVIHGMCKIGNVEDAWDLFRSLSCKGLKP, and DVVSYTTMISGFCRKRQWDKSDLLYRKMQEDGLLP.

This sequence belongs to the PPR family. P subfamily.

The polypeptide is Pentatricopeptide repeat-containing protein At1g62720 (Arabidopsis thaliana (Mouse-ear cress)).